A 198-amino-acid polypeptide reads, in one-letter code: Armadillo repeat-containing protein 7 (198 aa).

ARM repeat units lie at residues 57–99 and 100–140; these read QVLD…HAGG and VPLI…TATP. Position 169 is a phosphoserine (serine 169).

In terms of assembly, component of the minor spliceosome. Within this complex, interacts with RBM48.

As a component of the minor spliceosome, involved in the splicing of U12-type introns in pre-mRNAs. The polypeptide is Armadillo repeat-containing protein 7 (ARMC7) (Homo sapiens (Human)).